The following is a 291-amino-acid chain: ATP synthase gamma chain (291 aa).

The protein belongs to the ATPase gamma chain family. As to quaternary structure, F-type ATPases have 2 components, CF(1) - the catalytic core - and CF(0) - the membrane proton channel. CF(1) has five subunits: alpha(3), beta(3), gamma(1), delta(1), epsilon(1). CF(0) has three main subunits: a, b and c.

It is found in the cell membrane. Functionally, produces ATP from ADP in the presence of a proton gradient across the membrane. The gamma chain is believed to be important in regulating ATPase activity and the flow of protons through the CF(0) complex. The polypeptide is ATP synthase gamma chain (Streptococcus pyogenes serotype M49 (strain NZ131)).